The primary structure comprises 367 residues: Queuine tRNA-ribosyltransferase (367 aa).

Catalysis depends on D92, which acts as the Proton acceptor. Substrate is bound by residues 92-96 (DSGGF), D146, Q188, and G215. Residues 246-252 (GVGTPKD) form an RNA binding region. Catalysis depends on D265, which acts as the Nucleophile. Residues C303, C305, C308, and H334 each coordinate Zn(2+).

It belongs to the queuine tRNA-ribosyltransferase family. In terms of assembly, homodimer. Within each dimer, one monomer is responsible for RNA recognition and catalysis, while the other monomer binds to the replacement base PreQ1. Zn(2+) serves as cofactor.

It carries out the reaction 7-aminomethyl-7-carbaguanine + guanosine(34) in tRNA = 7-aminomethyl-7-carbaguanosine(34) in tRNA + guanine. The protein operates within tRNA modification; tRNA-queuosine biosynthesis. In terms of biological role, catalyzes the base-exchange of a guanine (G) residue with the queuine precursor 7-aminomethyl-7-deazaguanine (PreQ1) at position 34 (anticodon wobble position) in tRNAs with GU(N) anticodons (tRNA-Asp, -Asn, -His and -Tyr). Catalysis occurs through a double-displacement mechanism. The nucleophile active site attacks the C1' of nucleotide 34 to detach the guanine base from the RNA, forming a covalent enzyme-RNA intermediate. The proton acceptor active site deprotonates the incoming PreQ1, allowing a nucleophilic attack on the C1' of the ribose to form the product. After dissociation, two additional enzymatic reactions on the tRNA convert PreQ1 to queuine (Q), resulting in the hypermodified nucleoside queuosine (7-(((4,5-cis-dihydroxy-2-cyclopenten-1-yl)amino)methyl)-7-deazaguanosine). This is Queuine tRNA-ribosyltransferase from Francisella tularensis subsp. holarctica (strain FTNF002-00 / FTA).